A 400-amino-acid polypeptide reads, in one-letter code: Elongation factor Tu (400 aa).

One can recognise a tr-type G domain in the interval 10 to 209 (KPHVNVGTIG…AVDSYIPTPE (200 aa)). The tract at residues 19-26 (GHVDHGKT) is G1. 19 to 26 (GHVDHGKT) serves as a coordination point for GTP. Thr26 lines the Mg(2+) pocket. Positions 60-64 (GITIA) are G2. Residues 81–84 (DCPG) are G3. GTP contacts are provided by residues 81–85 (DCPGH) and 136–139 (NKVD). The interval 136–139 (NKVD) is G4. The tract at residues 174 to 176 (SAL) is G5.

This sequence belongs to the TRAFAC class translation factor GTPase superfamily. Classic translation factor GTPase family. EF-Tu/EF-1A subfamily. In terms of assembly, monomer.

Its subcellular location is the cytoplasm. It carries out the reaction GTP + H2O = GDP + phosphate + H(+). GTP hydrolase that promotes the GTP-dependent binding of aminoacyl-tRNA to the A-site of ribosomes during protein biosynthesis. The chain is Elongation factor Tu from Moorella thermoacetica (strain ATCC 39073 / JCM 9320).